A 476-amino-acid polypeptide reads, in one-letter code: Glycogen synthase (476 aa).

Lysine 15 is an ADP-alpha-D-glucose binding site.

The protein belongs to the glycosyltransferase 1 family. Bacterial/plant glycogen synthase subfamily.

It catalyses the reaction [(1-&gt;4)-alpha-D-glucosyl](n) + ADP-alpha-D-glucose = [(1-&gt;4)-alpha-D-glucosyl](n+1) + ADP + H(+). It participates in glycan biosynthesis; glycogen biosynthesis. In terms of biological role, synthesizes alpha-1,4-glucan chains using ADP-glucose. The sequence is that of Glycogen synthase from Bacillus cereus (strain ATCC 10987 / NRS 248).